Reading from the N-terminus, the 594-residue chain is UvrABC system protein C (594 aa).

The GIY-YIG domain maps to 14–91 (DQPGCYLMKD…IKKHDPKYNI (78 aa)). One can recognise a UVR domain in the interval 196-231 (KEVRSELETKMYEASEKLEFERAKELRDQIAHIDAI).

Belongs to the UvrC family. In terms of assembly, interacts with UvrB in an incision complex.

Its subcellular location is the cytoplasm. In terms of biological role, the UvrABC repair system catalyzes the recognition and processing of DNA lesions. UvrC both incises the 5' and 3' sides of the lesion. The N-terminal half is responsible for the 3' incision and the C-terminal half is responsible for the 5' incision. The protein is UvrABC system protein C of Bacillus anthracis (strain A0248).